A 269-amino-acid chain; its full sequence is MPELPEVETSRRGIEPHLVGATILHAVVRNGRLRWPVSEEIYRLSDQPVLSVQRRAKYLLLELPEGWIIIHLGMSGSLRILPEELPPEKHDHVDLVMSNGKVLRYTDPRRFGAWLWTKELEGHNVLTHLGPEPLSDDFNGEYLHQKCAKKKTAIKPWLMDNKLVVGVGNIYASESLFAAGIHPDRLASSLSLAECELLARVIKAVLLRSIEQGGTTLKDFLQSDGKPGYFAQELQVYGRKGEPCRVCGTPIVATKHAQRATFYCRQCQK.

The Schiff-base intermediate with DNA role is filled by proline 2. The active-site Proton donor is the glutamate 3. Lysine 57 acts as the Proton donor; for beta-elimination activity in catalysis. Residues histidine 90, arginine 109, and lysine 150 each contribute to the DNA site. The segment at 235–269 (QVYGRKGEPCRVCGTPIVATKHAQRATFYCRQCQK) adopts an FPG-type zinc-finger fold. Arginine 259 (proton donor; for delta-elimination activity) is an active-site residue.

This sequence belongs to the FPG family. Monomer. Zn(2+) serves as cofactor.

The catalysed reaction is Hydrolysis of DNA containing ring-opened 7-methylguanine residues, releasing 2,6-diamino-4-hydroxy-5-(N-methyl)formamidopyrimidine.. It catalyses the reaction 2'-deoxyribonucleotide-(2'-deoxyribose 5'-phosphate)-2'-deoxyribonucleotide-DNA = a 3'-end 2'-deoxyribonucleotide-(2,3-dehydro-2,3-deoxyribose 5'-phosphate)-DNA + a 5'-end 5'-phospho-2'-deoxyribonucleoside-DNA + H(+). Functionally, involved in base excision repair of DNA damaged by oxidation or by mutagenic agents. Acts as a DNA glycosylase that recognizes and removes damaged bases. Has a preference for oxidized purines, such as 7,8-dihydro-8-oxoguanine (8-oxoG). Has AP (apurinic/apyrimidinic) lyase activity and introduces nicks in the DNA strand. Cleaves the DNA backbone by beta-delta elimination to generate a single-strand break at the site of the removed base with both 3'- and 5'-phosphates. The polypeptide is Formamidopyrimidine-DNA glycosylase (Escherichia coli (strain K12 / MC4100 / BW2952)).